Reading from the N-terminus, the 208-residue chain is ATP-dependent Clp protease proteolytic subunit (208 aa).

The Nucleophile role is filled by serine 112. Residue histidine 137 is part of the active site.

The protein belongs to the peptidase S14 family. In terms of assembly, fourteen ClpP subunits assemble into 2 heptameric rings which stack back to back to give a disk-like structure with a central cavity, resembling the structure of eukaryotic proteasomes.

The protein resides in the cytoplasm. The enzyme catalyses Hydrolysis of proteins to small peptides in the presence of ATP and magnesium. alpha-casein is the usual test substrate. In the absence of ATP, only oligopeptides shorter than five residues are hydrolyzed (such as succinyl-Leu-Tyr-|-NHMec, and Leu-Tyr-Leu-|-Tyr-Trp, in which cleavage of the -Tyr-|-Leu- and -Tyr-|-Trp bonds also occurs).. Its function is as follows. Cleaves peptides in various proteins in a process that requires ATP hydrolysis. Has a chymotrypsin-like activity. Plays a major role in the degradation of misfolded proteins. In Buchnera aphidicola subsp. Acyrthosiphon pisum (strain APS) (Acyrthosiphon pisum symbiotic bacterium), this protein is ATP-dependent Clp protease proteolytic subunit.